The primary structure comprises 223 residues: Ras-related protein Rab-21 (223 aa).

At Ala-2 the chain carries N-acetylalanine. GTP-binding residues include Gly-26, Gly-29, Lys-30, Thr-31, Ser-32, Asn-43, Asp-44, His-46, Thr-48, and Thr-49. Residue Thr-31 coordinates Mg(2+). The short motif at 41–54 (KFNDKHITTLQASF) is the Switch 1 element. Residues Thr-49 and Asp-72 each contribute to the Mg(2+) site. The Switch 2 motif lies at 74-92 (AGQERFHALGPIYYRDSNG). Gly-75, Asn-130, Lys-131, Asp-133, Ala-161, and Lys-162 together coordinate GTP. 2 S-geranylgeranyl cysteine lipidation sites follow: Cys-219 and Cys-220. Position 220 is a cysteine methyl ester (Cys-220). Residues 221 to 223 (SSG) constitute a propeptide, removed in mature form.

It belongs to the small GTPase superfamily. Rab family. As to quaternary structure, interacts with the cytoplasmic tail of integrins ITGA1, ITGA2, ITGA5, ITGA6, ITGA11 and ITGB1; this interaction is dependent upon its GDP/GTP cycle. Interacts with RABGEF1 (via VPS9 domain). Interacts with ANKRD27. Interacts (in GTP-bound form) with VAMP8 in response to starvation; the interaction probably regulates VAMP8 endolysosomal trafficking. Interacts (active GTP-bound form) with TMED10; the interaction is indirect and regulates TMED10 abundance and localization at the Golgi. It depends on Mg(2+) as a cofactor.

It localises to the endoplasmic reticulum membrane. The protein resides in the golgi apparatus. It is found in the trans-Golgi network. Its subcellular location is the golgi apparatus membrane. The protein localises to the early endosome membrane. It localises to the cytoplasmic vesicle membrane. The protein resides in the cleavage furrow. It is found in the cell projection. Its subcellular location is the neuron projection. The enzyme catalyses GTP + H2O = GDP + phosphate + H(+). Its activity is regulated as follows. Regulated by guanine nucleotide exchange factors (GEFs) including ANKRD27 and RABGEF1, which promote the exchange of bound GDP for free GTP. Regulated by GTPase activating proteins (GAPs) which increase the GTP hydrolysis activity. Inhibited by GDP dissociation inhibitors (GDIs). Functionally, the small GTPases Rab are key regulators of intracellular membrane trafficking, from the formation of transport vesicles to their fusion with membranes. Rabs cycle between an inactive GDP-bound form and an active GTP-bound form that is able to recruit to membranes different sets of downstream effectors directly responsible for vesicle formation, movement, tethering and fusion. RAB21 is involved in membrane trafficking control. Regulates integrin internalization and recycling, but does not influence the traffic of endosomally translocated receptors in general. As a result, may regulate cell adhesion and migration. During the mitosis of adherent cells, controls the endosomal trafficking of integrins which is required for the successful completion of cytokinesis. Involved in neurite growth. Following SBF2/MTMT13-mediated activation in response to starvation-induced autophagy, binds to and regulates SNARE protein VAMP8 endolysosomal transport required for SNARE-mediated autophagosome-lysosome fusion. Modulates protein levels of the cargo receptors TMED2 and TMED10, and required for appropriate Golgi localization of TMED10. This chain is Ras-related protein Rab-21, found in Rattus norvegicus (Rat).